We begin with the raw amino-acid sequence, 618 residues long: 1-deoxy-D-xylulose-5-phosphate synthase (618 aa).

Thiamine diphosphate is bound by residues His-72 and 113-115 (GHA). Position 144 (Asp-144) interacts with Mg(2+). Thiamine diphosphate is bound by residues 145–146 (GA), Asn-173, His-284, and Glu-359. A Mg(2+)-binding site is contributed by Asn-173.

Belongs to the transketolase family. DXPS subfamily. As to quaternary structure, homodimer. Requires Mg(2+) as cofactor. The cofactor is thiamine diphosphate.

It catalyses the reaction D-glyceraldehyde 3-phosphate + pyruvate + H(+) = 1-deoxy-D-xylulose 5-phosphate + CO2. It functions in the pathway metabolic intermediate biosynthesis; 1-deoxy-D-xylulose 5-phosphate biosynthesis; 1-deoxy-D-xylulose 5-phosphate from D-glyceraldehyde 3-phosphate and pyruvate: step 1/1. Functionally, catalyzes the acyloin condensation reaction between C atoms 2 and 3 of pyruvate and glyceraldehyde 3-phosphate to yield 1-deoxy-D-xylulose-5-phosphate (DXP). The protein is 1-deoxy-D-xylulose-5-phosphate synthase of Dictyoglomus thermophilum (strain ATCC 35947 / DSM 3960 / H-6-12).